Consider the following 365-residue polypeptide: ATP-dependent (S)-NAD(P)H-hydrate dehydratase (365 aa).

A chloroplast-targeting transit peptide spans 1 to 43; that stretch reads MLVKPSIISGLVRLTSHSPSSSSSVLRRQEFLVRTLCGSPIIR. Position 2 is an N-acetylserine (leucine 2). In terms of domain architecture, YjeF C-terminal spans 53–361; the sequence is AESVLRTVTP…ECLGESLEDI (309 aa). (6S)-NADPHX is bound by residues glycine 169 and 222–228; that span reads NVNEYKR. Residues 262 to 266 and 281 to 290 each bind ATP; these read KGKSD and GSPRRCGGQG. Position 291 (aspartate 291) interacts with (6S)-NADPHX.

The protein belongs to the NnrD/CARKD family. Mg(2+) is required as a cofactor.

Its subcellular location is the plastid. It is found in the chloroplast. The protein resides in the cytoplasm. The enzyme catalyses (6S)-NADHX + ATP = ADP + phosphate + NADH + H(+). It carries out the reaction (6S)-NADPHX + ATP = ADP + phosphate + NADPH + H(+). Its function is as follows. Catalyzes the dehydration of the S-form of NAD(P)HX at the expense of ATP, which is converted to ADP. Together with NAD(P)HX epimerase, which catalyzes the epimerization of the S- and R-forms, the enzyme allows the repair of both epimers of NAD(P)HX, a damaged form of NAD(P)H that is a result of enzymatic or heat-dependent hydration. The sequence is that of ATP-dependent (S)-NAD(P)H-hydrate dehydratase from Arabidopsis thaliana (Mouse-ear cress).